The sequence spans 81 residues: Putative membrane protein insertion efficiency factor (81 aa).

Positions 59 to 81 (PWNPGGYDPVPPIKTSRSSSMAE) are disordered.

The protein belongs to the UPF0161 family.

It is found in the cell inner membrane. Could be involved in insertion of integral membrane proteins into the membrane. The chain is Putative membrane protein insertion efficiency factor from Azotobacter vinelandii (strain DJ / ATCC BAA-1303).